Reading from the N-terminus, the 251-residue chain is Vitamin B12 import ATP-binding protein BtuD (251 aa).

The region spanning 2–236 is the ABC transporter domain; it reads IRVNSLQVDS…EVLQSVFGTS (235 aa). 30 to 37 contributes to the ATP binding site; sequence GPNGCGKS.

The protein belongs to the ABC transporter superfamily. Vitamin B12 importer (TC 3.A.1.13.1) family. The complex is composed of two ATP-binding proteins (BtuD), two transmembrane proteins (BtuC) and a solute-binding protein (BtuF).

The protein localises to the cell inner membrane. It carries out the reaction an R-cob(III)alamin(out) + ATP + H2O = an R-cob(III)alamin(in) + ADP + phosphate + H(+). Part of the ABC transporter complex BtuCDF involved in vitamin B12 import. Responsible for energy coupling to the transport system. The protein is Vitamin B12 import ATP-binding protein BtuD of Vibrio cholerae serotype O1 (strain ATCC 39315 / El Tor Inaba N16961).